A 20-amino-acid chain; its full sequence is KLQLPTLDDPVPIGIAPAIT.

This Naegleria fowleri (Brain eating amoeba) protein is Unknown protein NF007 from 2D-PAGE.